The following is a 442-amino-acid chain: MGVTGGLVRSIFFRNKSFGAHDYNNGRGNLGEKKRWSSVRSYLCGDEFNSVRAVNDSESIKDSEALLTMSQQLSSEFGMPFGSVIAIEDSASVRHLEDEDSGSVKSSEATVTQPLLEEKSKGLDCYLKEEDVEDNQSEATETHIPKKHQTTPISKLFLEEDAAVIIQSAFRSYLAIRRSKEEEETFAKEESFSGEESQDNASMGTSLEAQTGNSVKAPFFRRKRVSANRRTLQKNNTQVLRIKEDWDDSTVSSTISKSRIQSRVEAMTKRERALAYAFSQQLRICSKKKQIDRSSEDDSNIGWSWLERWMATRVPDSIPIEPRTDVATKNQSLIRKNRAFGTAGELESCASNDLPLHFESISETQGDATTVLQTEKSSFKPSISKRKSVPSYKSQRKHHKLQATKSDLQQQTKKAKKAKTTPTSCKTGNECEETSHKLNSST.

Positions 159-188 (EEDAAVIIQSAFRSYLAIRRSKEEEETFAK) constitute an IQ domain. Positions 184-212 (ETFAKEESFSGEESQDNASMGTSLEAQTG) are disordered. Residues 199 to 212 (DNASMGTSLEAQTG) are compositionally biased toward polar residues. Residues 270 to 282 (RERALAYAFSQQL) form a calmodulin-binding region. The segment at 375-442 (EKSSFKPSIS…ETSHKLNSST (68 aa)) is disordered. A compositionally biased stretch (basic residues) spans 383–402 (ISKRKSVPSYKSQRKHHKLQ). Residues 385–392 (KRKSVPSY) carry the Nuclear localization signal motif.

It belongs to the IQD family. Binds to multiple calmodulin (CaM) in the presence of Ca(2+) and CaM-like proteins.

It localises to the nucleus. Functionally, may be involved in cooperative interactions with calmodulins or calmodulin-like proteins. Recruits calmodulin proteins to microtubules, thus being a potential scaffold in cellular signaling and trafficking. May associate with nucleic acids and regulate gene expression at the transcriptional or post-transcriptional level. The chain is Protein IQ-DOMAIN 33 from Arabidopsis thaliana (Mouse-ear cress).